A 78-amino-acid chain; its full sequence is DNA-directed RNA polymerase subunit omega (78 aa).

The protein belongs to the RNA polymerase subunit omega family. In cyanobacteria the RNAP catalytic core is composed of 2 alpha, 1 beta, 1 beta', 1 gamma and 1 omega subunit. When a sigma factor is associated with the core the holoenzyme is formed, which can initiate transcription.

The catalysed reaction is RNA(n) + a ribonucleoside 5'-triphosphate = RNA(n+1) + diphosphate. Promotes RNA polymerase assembly. Latches the N- and C-terminal regions of the beta' subunit thereby facilitating its interaction with the beta and alpha subunits. This Prochlorococcus marinus subsp. pastoris (strain CCMP1986 / NIES-2087 / MED4) protein is DNA-directed RNA polymerase subunit omega.